The primary structure comprises 378 residues: Homoserine O-acetyltransferase (378 aa).

Residues 54–355 (NAILVCHALS…NNPAGHDSFL (302 aa)) form the AB hydrolase-1 domain. Serine 159 acts as the Nucleophile in catalysis. Arginine 228 provides a ligand contact to substrate. Catalysis depends on residues aspartate 318 and histidine 351. Aspartate 352 lines the substrate pocket.

This sequence belongs to the AB hydrolase superfamily. MetX family. In terms of assembly, homodimer.

It localises to the cytoplasm. The enzyme catalyses L-homoserine + acetyl-CoA = O-acetyl-L-homoserine + CoA. It participates in amino-acid biosynthesis; L-methionine biosynthesis via de novo pathway; O-acetyl-L-homoserine from L-homoserine: step 1/1. Functionally, transfers an acetyl group from acetyl-CoA to L-homoserine, forming acetyl-L-homoserine. In Leptospira biflexa serovar Patoc (strain Patoc 1 / Ames), this protein is Homoserine O-acetyltransferase.